We begin with the raw amino-acid sequence, 575 residues long: Acetylcholine receptor subunit beta-type acr-2 (575 aa).

A signal peptide spans 1 to 20 (MKKTVKILLILITVFLKVHC). Residues 21–270 (NGGHDDEAAD…IRRKTLFYTV (250 aa)) are Extracellular-facing. Positions 31–57 (FLSHTNIDDPNNSSDPNKNSDQGDTMG) are disordered. A compositionally biased stretch (low complexity) spans 38–50 (DDPNNSSDPNKNS). Asn-41, Asn-42, Asn-80, and Asn-131 each carry an N-linked (GlcNAc...) asparagine glycan. Cys-185 and Cys-199 are disulfide-bonded. The next 3 membrane-spanning stretches (helical) occupy residues 271 to 291 (ILII…YLPV), 299 to 319 (LTIS…KILP), and 331 to 351 (LLLA…IVNI). The Cytoplasmic segment spans residues 352-527 (YFRSALSHKM…WKYVAMVLDR (176 aa)). A helical membrane pass occupies residues 528-548 (LILLIFFGVTLGGTLGIICSA).

It belongs to the ligand-gated ion channel (TC 1.A.9) family. Acetylcholine receptor (TC 1.A.9.1) subfamily. As to quaternary structure, component of nicotinic acetylcholine receptor. In cholinergic motoneurons, composed of 2 non-alpha subunits acr-2 and acr-3, and 3 alpha subunits unc-38, unc-63 and acr-12. Specifically expressed in cholinergic ventral cord motoneurons of the VA, VB, DA and DB classes but not AS and VC classes. Expressed in PVQ and DVC neurons in the tail.

Its subcellular location is the postsynaptic cell membrane. It localises to the cell membrane. In terms of biological role, non-alpha subunit of nicotinic acetylcholine receptor (nAChR). Acts in cholinergic motoneurons to regulate presynaptic neurotransmitter release, thereby ensuring normal level of excitation of cholinergic motoneurons during locomotion. The polypeptide is Acetylcholine receptor subunit beta-type acr-2 (acr-2) (Caenorhabditis elegans).